Reading from the N-terminus, the 98-residue chain is Gas vesicle protein J2 (98 aa).

Residues 75–98 (AGVDADDSKSVLERPDPPTTEGSE) form a disordered region. Positions 80–90 (DDSKSVLERPD) are enriched in basic and acidic residues.

It belongs to the gas vesicle GvpA family. GvpF to GvpM interact with each other in vitro, and may form multi-subunit complex(es). Interacts with GvpA.

The protein localises to the gas vesicle. A minor component of the gas vesicle. Proteins GvpF to GvpM might be involved in nucleating gas vesicle formation. Gas vesicles are hollow, gas filled proteinaceous nanostructures found in several microbial planktonic microorganisms. They allow positioning of halobacteria at the optimal depth for growth in the poorly aerated, shallow brine pools of their habitat. Its function is as follows. Expression of 2 c-vac DNA fragments containing 2 divergently transcribed regions (gvpE-gvpF-gvpG-gvpH-gvpI-gvpJ-gvpK-gvpL-gvpM and gvpA-gvpC-gvpN-gvpO) allows H.volcanii to produce gas vesicles. This chain is Gas vesicle protein J2, found in Halobacterium salinarum (strain ATCC 700922 / JCM 11081 / NRC-1) (Halobacterium halobium).